We begin with the raw amino-acid sequence, 212 residues long: Thymidylate kinase (212 aa).

11 to 18 (GIEGSGKT) contributes to the ATP binding site.

This sequence belongs to the thymidylate kinase family.

It catalyses the reaction dTMP + ATP = dTDP + ADP. Phosphorylation of dTMP to form dTDP in both de novo and salvage pathways of dTTP synthesis. The chain is Thymidylate kinase from Buchnera aphidicola subsp. Baizongia pistaciae (strain Bp).